A 424-amino-acid chain; its full sequence is MRLLLCLIFLVFVFNFALSTVHFKDTFDNDWESRWVVSDWHKEDGKSGKLVHTAGKWFGDENQKGIQTSEDARFYAVSAKFPSFSNKGKDLVLQYTVKNEQKVDCGGSYIKLLPSKLDQSAFDGESEYSIMFGPDVCGASKRVHVILNYKGKNHLIKKEINKVETDQLTHQYTLVISPDNTYKVLVDNKEIQAGNLADDWELLPSKQIKDPKQSKPVDWVDVKEIDDPEDVKPAGHDDIPASIVDPEAVKPEDWNEEDDGEWEAPTIANPEYKGEWKAKKIPNPEYKGEWVHPLIDNPEYAEDNELYLFNDLGAIGFELWQVKSGSIFNNMIVTDSVEEAKDFSEKTFVANQEAEKKMFDDLEAAKAEERKKADEKLAAEKAAEKEAEEADEEEEEVAEEDLVKTDDKKEEVKKSTKKVDHDEL.

A signal peptide spans 1–19 (MRLLLCLIFLVFVFNFALS). A disulfide bridge connects residues Cys-105 and Cys-137. An alpha-D-glucoside is bound by residues Tyr-109, Lys-111, Tyr-128, and Asp-135. 7 consecutive repeat copies span residues 191 to 202 (IQAGNLADDWEL), 210 to 221 (DPKQSKPVDWVD), 227 to 238 (DPEDVKPAGHDD), 246 to 256 (PEAVKPEDWNE), 260 to 270 (GEWEAPTIANP), 274 to 284 (GEWKAKKIPNP), and 288 to 298 (GEWVHPLIDNP). The interval 191–256 (IQAGNLADDW…EAVKPEDWNE (66 aa)) is 4 X 12 AA approximate repeats. The tract at residues 260–298 (GEWEAPTIANPEYKGEWKAKKIPNPEYKGEWVHPLIDNP) is 3 X 11 AA approximate repeats. Glu-318 is a binding site for an alpha-D-glucoside. Residues 370 to 385 (RKKADEKLAAEKAAEK) are compositionally biased toward basic and acidic residues. The segment at 370–424 (RKKADEKLAAEKAAEKEAEEADEEEEEVAEEDLVKTDDKKEEVKKSTKKVDHDEL) is disordered. A compositionally biased stretch (acidic residues) spans 386–400 (EAEEADEEEEEVAEE). Positions 401–424 (DLVKTDDKKEEVKKSTKKVDHDEL) are enriched in basic and acidic residues. The Prevents secretion from ER signature appears at 421-424 (HDEL).

This sequence belongs to the calreticulin family.

It localises to the endoplasmic reticulum lumen. Functionally, molecular calcium-binding chaperone promoting folding, oligomeric assembly and quality control in the ER via the calreticulin/calnexin cycle. This lectin may interact transiently with almost all of the monoglucosylated glycoproteins that are synthesized in the ER. The protein is Calreticulin (crtA) of Dictyostelium discoideum (Social amoeba).